We begin with the raw amino-acid sequence, 389 residues long: 2-deoxystreptamine N-acetyl-D-glucosaminyltransferase (389 aa).

Belongs to the glycosyltransferase group 1 family.

It catalyses the reaction 2-deoxystreptamine + UDP-N-acetyl-alpha-D-glucosamine = 2'-N-acetylparomamine + UDP + H(+). Its pathway is antibiotic biosynthesis; butirosin biosynthesis. Functionally, glycosyltransferase involved in the biosynthesis of butirosin by mediating conversion of 2-deoxystreptamine (2-DOS) to 2'-N-acetylparomamine using UDP-alpha-D-glucosamine as sugar donor. In Niallia circulans (Bacillus circulans), this protein is 2-deoxystreptamine N-acetyl-D-glucosaminyltransferase (btrM).